The chain runs to 271 residues: Formamidopyrimidine-DNA glycosylase (271 aa).

The Schiff-base intermediate with DNA role is filled by proline 2. Catalysis depends on glutamate 3, which acts as the Proton donor. Lysine 57 serves as the catalytic Proton donor; for beta-elimination activity. Residues histidine 90, arginine 109, and lysine 151 each contribute to the DNA site. The FPG-type zinc finger occupies 236-270 (HVYGRGSKSCTHCGNLLSEIRLGQRTTVFCGLCQT). Arginine 260 (proton donor; for delta-elimination activity) is an active-site residue.

This sequence belongs to the FPG family. As to quaternary structure, monomer. Zn(2+) serves as cofactor.

The enzyme catalyses Hydrolysis of DNA containing ring-opened 7-methylguanine residues, releasing 2,6-diamino-4-hydroxy-5-(N-methyl)formamidopyrimidine.. It catalyses the reaction 2'-deoxyribonucleotide-(2'-deoxyribose 5'-phosphate)-2'-deoxyribonucleotide-DNA = a 3'-end 2'-deoxyribonucleotide-(2,3-dehydro-2,3-deoxyribose 5'-phosphate)-DNA + a 5'-end 5'-phospho-2'-deoxyribonucleoside-DNA + H(+). Functionally, involved in base excision repair of DNA damaged by oxidation or by mutagenic agents. Acts as a DNA glycosylase that recognizes and removes damaged bases. Has a preference for oxidized purines, such as 7,8-dihydro-8-oxoguanine (8-oxoG). Has AP (apurinic/apyrimidinic) lyase activity and introduces nicks in the DNA strand. Cleaves the DNA backbone by beta-delta elimination to generate a single-strand break at the site of the removed base with both 3'- and 5'-phosphates. The sequence is that of Formamidopyrimidine-DNA glycosylase from Shewanella denitrificans (strain OS217 / ATCC BAA-1090 / DSM 15013).